Here is a 339-residue protein sequence, read N- to C-terminus: Sphingomyelinase D (339 aa).

Positions 1 to 21 (MVSLLRLCSFLLAAGSILVQG) are cleaved as a signal peptide. His-60 is an active-site residue. Residues Glu-80, Asp-82, and Asp-128 each contribute to the Mg(2+) site. An SMD-tail motif is present at residues 309-316 (ATVDDNPW). Residues 313-339 (DNPWSSMSKKGSSKSSWVKGEVPSIAH) form a disordered region. Residues 317 to 328 (SSMSKKGSSKSS) are compositionally biased toward low complexity.

The protein belongs to the sphingomyelinase D/phospholipase D family. It depends on Mg(2+) as a cofactor.

It is found in the secreted. The enzyme catalyses a sphingomyelin + H2O = an N-acylsphing-4-enine 1-phosphate + choline + H(+). In terms of biological role, catalyzes the hydrolysis of sphingomyelin. Sphingomyelinases D are produced by some spider in their venoms, but also by arthropods such as ticks, or pathogenic bacteria and fungi. They might play a role in pathogenicity through different mechanisms, such as membrane destabilization and host cell penetration, but also pulmonary inflammation and cutaneous lesions. This chain is Sphingomyelinase D, found in Arthroderma benhamiae (strain ATCC MYA-4681 / CBS 112371) (Trichophyton mentagrophytes).